The sequence spans 142 residues: MVLSPADKSNVKAAWGKVGGHAGEYGAEALERMFLSFPTTKTYFPHFDLSHGSAQVKGHGKKVADALTLAVGHVDDMPHALSALSDLHAHKLRVDPVNFKLLSHCLLVTLAAHLPAEFTPAVHASLDKFLASVSTVLTSKYR.

The region spanning 2-142 (VLSPADKSNV…VSTVLTSKYR (141 aa)) is the Globin domain. Ser-4 carries the post-translational modification Phosphoserine. Lys-8 and Lys-12 each carry N6-succinyllysine. Lys-17 is modified (N6-acetyllysine; alternate). N6-succinyllysine; alternate is present on Lys-17. Residue Tyr-25 is modified to Phosphotyrosine. Position 36 is a phosphoserine (Ser-36). Lys-41 bears the N6-succinyllysine mark. At Ser-50 the chain carries Phosphoserine. Residue His-59 participates in O2 binding. His-88 contributes to the heme b binding site. Ser-103 carries the phosphoserine modification. Thr-109 is modified (phosphothreonine). Residues Ser-125 and Ser-132 each carry the phosphoserine modification. Thr-135 and Thr-138 each carry phosphothreonine. Ser-139 carries the phosphoserine modification.

It belongs to the globin family. Heterotetramer of two alpha chains and two beta chains. Red blood cells.

Involved in oxygen transport from the lung to the various peripheral tissues. Functionally, hemopressin acts as an antagonist peptide of the cannabinoid receptor CNR1. Hemopressin-binding efficiently blocks cannabinoid receptor CNR1 and subsequent signaling. In Chlorocebus aethiops (Green monkey), this protein is Hemoglobin subunit alpha (HBA).